Consider the following 135-residue polypeptide: Interleukin-4 (135 aa).

Residues 1–24 (MGLTSQLIPVLVCLLACTSHFVHG) form the signal peptide. Disulfide bonds link Cys27/Cys135, Cys48/Cys85, and Cys70/Cys105. N-linked (GlcNAc...) asparagine glycosylation is found at Asn62 and Asn96.

This sequence belongs to the IL-4/IL-13 family.

The protein resides in the secreted. Participates in at least several B-cell activation processes as well as of other cell types. It is a costimulator of DNA-synthesis. It induces the expression of class II MHC molecules on resting B-cells. It enhances both secretion and cell surface expression of IgE and IgG1. It also regulates the expression of the low affinity Fc receptor for IgE (CD23) on both lymphocytes and monocytes. Positively regulates IL31RA expression in macrophages. Stimulates autophagy in dendritic cells by interfering with mTORC1 signaling and through the induction of RUFY4. This chain is Interleukin-4 (IL4), found in Cervus elaphus (Red deer).